Reading from the N-terminus, the 130-residue chain is Small ribosomal subunit protein uS9 (130 aa).

The protein belongs to the universal ribosomal protein uS9 family.

The protein is Small ribosomal subunit protein uS9 of Clostridium perfringens (strain ATCC 13124 / DSM 756 / JCM 1290 / NCIMB 6125 / NCTC 8237 / Type A).